A 480-amino-acid chain; its full sequence is tRNA modification GTPase MnmE (480 aa).

The (6S)-5-formyl-5,6,7,8-tetrahydrofolate site is built by Arg-20, Glu-114, and Lys-154. Residues 250–406 (GLKLAIIGPP…ILKNIENIAE (157 aa)) form the TrmE-type G domain. Asn-260 is a K(+) binding site. Residues 260-265 (NVGKSS), 279-285 (SNIAGTT), and 304-307 (DTAG) contribute to the GTP site. Ser-264 lines the Mg(2+) pocket. The K(+) site is built by Ser-279, Ile-281, and Thr-284. Thr-285 lines the Mg(2+) pocket. Position 480 (Lys-480) interacts with (6S)-5-formyl-5,6,7,8-tetrahydrofolate.

The protein belongs to the TRAFAC class TrmE-Era-EngA-EngB-Septin-like GTPase superfamily. TrmE GTPase family. As to quaternary structure, homodimer. Heterotetramer of two MnmE and two MnmG subunits. It depends on K(+) as a cofactor.

The protein resides in the cytoplasm. In terms of biological role, exhibits a very high intrinsic GTPase hydrolysis rate. Involved in the addition of a carboxymethylaminomethyl (cmnm) group at the wobble position (U34) of certain tRNAs, forming tRNA-cmnm(5)s(2)U34. The polypeptide is tRNA modification GTPase MnmE (Rickettsia felis (strain ATCC VR-1525 / URRWXCal2) (Rickettsia azadi)).